Consider the following 234-residue polypeptide: Phycobilisome rod-core linker polypeptide cpcG (234 aa).

The PBS-linker domain maps to 11–191 (SSQNHRVNSF…PRYGSDFKER (181 aa)).

The protein belongs to the phycobilisome linker protein family. The phycobilisome is a hemidiscoidal structure that is composed of two distinct substructures: a core complex and a number of rods radiating from the core.

Its subcellular location is the plastid. It localises to the chloroplast thylakoid membrane. Functionally, rod-core linker protein required for attachment of phycocyanin to allophycocyanin in cores of phycobilisomes. In terms of biological role, linker polypeptides determine the state of aggregation and the location of the disk-shaped phycobiliprotein units within the phycobilisome and modulate their spectroscopic properties in order to mediate a directed and optimal energy transfer. This Cyanidium caldarium (Red alga) protein is Phycobilisome rod-core linker polypeptide cpcG (cpcG).